We begin with the raw amino-acid sequence, 264 residues long: Agamous-like MADS-box protein AGL15 (264 aa).

In terms of domain architecture, MADS-box spans 3–57 (RGKIEIKRIENANSRQVTFSKRRAGLLKKAHELSVLCDAEVAVIVFSKSGKLFEF). Residues 87–177 (NQEECTEVDL…RRQVQELRSF (91 aa)) form the K-box domain. Positions 223 to 264 (LQLGLPGEAHDTRKNEGDRESPSSDSVTTSTTRATAQRISLV) are disordered. The segment covering 230–244 (EAHDTRKNEGDRESP) has biased composition (basic and acidic residues). Positions 245–257 (SSDSVTTSTTRAT) are enriched in low complexity.

The protein localises to the nucleus. Functionally, probable transcription factor. The sequence is that of Agamous-like MADS-box protein AGL15 (AGL15) from Brassica napus (Rape).